Here is an 859-residue protein sequence, read N- to C-terminus: Envelope glycoprotein gp160 (859 aa).

The signal sequence occupies residues 1–24 (MCGRNQLFVASLLASACLIYCVQY). The Extracellular segment spans residues 25–673 (VTVFYGVPVW…LTSWIKYIQY (649 aa)). Residue asparagine 36 is glycosylated (N-linked (GlcNAc...) asparagine; by host). Cysteines 43 and 56 form a disulfide. Residues asparagine 69, asparagine 78, asparagine 113, asparagine 119, asparagine 131, asparagine 137, asparagine 145, asparagine 160, asparagine 173, asparagine 186, asparagine 200, asparagine 232, asparagine 235, asparagine 242, asparagine 266, asparagine 272, asparagine 283, asparagine 294, asparagine 304, asparagine 359, asparagine 392, asparagine 402, asparagine 405, asparagine 442, asparagine 457, and asparagine 460 are each glycosylated (N-linked (GlcNAc...) asparagine; by host). 5 disulfides stabilise this stretch: cysteine 100/cysteine 208, cysteine 107/cysteine 199, cysteine 112/cysteine 157, cysteine 221/cysteine 251, and cysteine 231/cysteine 243. A V1 region spans residues 112-156 (CNSTTAKNTTSTPTTTTTANTTIGENSSCIRTDNCTGLGEEEMVD). The segment at 157–199 (CQFNMTGLERDKKKLYNETWYSKDVVCESNDTKKEKTCYMNHC) is V2. Residues 299 to 331 (CKRPGNKTVVPITLMSGLVFHSQPINRRPRQAW) are V3. The cysteines at positions 299 and 332 are disulfide-linked. 2 cysteine pairs are disulfide-bonded: cysteine 384–cysteine 441 and cysteine 391–cysteine 414. The interval 391–414 (CNMTWFLNWVENRTNQTQHNYVPC) is V4. The V5 stretch occupies residues 457–463 (NQTNITF). The tract at residues 506-526 (GVFVLGFLGFLTTAGAAMGAA) is fusion peptide. The interval 569-585 (LQARVTAIEKYLKDQAQ) is immunosuppression. Residues asparagine 605, asparagine 614, and asparagine 630 are each glycosylated (N-linked (GlcNAc...) asparagine; by host). A coiled-coil region spans residues 614–646 (NMTWQEWEQRIRNLEANISESLEQAQIQQEKNM). Positions 651–672 (KLNSWDVFGNWFDLTSWIKYIQ) are MPER; binding to GalCer. Residues 674-694 (GVYIVVGIIVLRIVIYVVQML) traverse the membrane as a helical segment. The Cytoplasmic portion of the chain corresponds to 695-859 (SRLRKGYRPV…IRQGAEIALL (165 aa)). The YXXV motif; contains endocytosis signal motif lies at 701-704 (YRPV). Cysteine 767 is lipidated: S-palmitoyl cysteine; by host. A Di-leucine internalization motif motif is present at residues 858–859 (LL).

The mature envelope protein (Env) consists of a homotrimer of non-covalently associated gp120-gp41 heterodimers. The resulting complex protrudes from the virus surface as a spike. There seems to be as few as 10 spikes on the average virion. Interacts with human CD4, CCR5 and CXCR4, to form a P4HB/PDI-CD4-CXCR4-gp120 complex. Gp120 also interacts with the C-type lectins CD209/DC-SIGN and CLEC4M/DC-SIGNR (collectively referred to as DC-SIGN(R)). Gp120 and gp41 interact with GalCer. In terms of assembly, the mature envelope protein (Env) consists of a homotrimer of non-covalently associated gp120-gp41 heterodimers. The resulting complex protrudes from the virus surface as a spike. There seems to be as few as 10 spikes on the average virion. Post-translationally, specific enzymatic cleavages in vivo yield mature proteins. Envelope glycoproteins are synthesized as an inactive precursor that is heavily N-glycosylated and processed likely by host cell furin in the Golgi to yield the mature SU and TM proteins. The cleavage site between SU and TM requires the minimal sequence [KR]-X-[KR]-R. In terms of processing, palmitoylation of the transmembrane protein and of Env polyprotein (prior to its proteolytic cleavage) is essential for their association with host cell membrane lipid rafts. Palmitoylation is therefore required for envelope trafficking to classical lipid rafts, but not for viral replication.

The protein resides in the virion membrane. It localises to the host cell membrane. It is found in the host endosome membrane. In terms of biological role, the surface protein gp120 (SU) attaches the virus to the host lymphoid cell by binding to the primary receptor CD4. This interaction induces a structural rearrangement creating a high affinity binding site for a chemokine coreceptor like CXCR4 and/or CCR5. This peculiar 2 stage receptor-interaction strategy allows gp120 to maintain the highly conserved coreceptor-binding site in a cryptic conformation, protected from neutralizing antibodies. Since CD4 also displays a binding site for the disulfide-isomerase P4HB/PDI, a P4HB/PDI-CD4-CXCR4-gp120 complex may form. In that complex, P4HB/PDI could reach and reduce gp120 disulfide bonds, causing major conformational changes in gp120. TXN, another PDI family member could also be involved in disulfide rearrangements in Env during fusion. These changes are transmitted to the transmembrane protein gp41 and are thought to activate its fusogenic potential by unmasking its fusion peptide. The surface protein gp120 is a ligand for CD209/DC-SIGN and CLEC4M/DC-SIGNR, which are respectively found on dendritic cells (DCs), and on endothelial cells of liver sinusoids and lymph node sinuses. These interactions allow capture of viral particles at mucosal surfaces by these cells and subsequent transmission to permissive cells. DCs are professional antigen presenting cells, critical for host immunity by inducing specific immune responses against a broad variety of pathogens. They act as sentinels in various tissues where they take up antigen, process it, and present it to T-cells following migration to lymphoid organs. HIV subverts the migration properties of dendritic cells to gain access to CD4+ T-cells in lymph nodes. Virus transmission to permissive T-cells occurs either in trans (without DCs infection, through viral capture and transmission), or in cis (following DCs productive infection, through the usual CD4-gp120 interaction), thereby inducing a robust infection. In trans infection, bound virions remain infectious over days and it is proposed that they are not degraded, but protected in non-lysosomal acidic organelles within the DCs close to the cell membrane thus contributing to the viral infectious potential during DCs' migration from the periphery to the lymphoid tissues. On arrival at lymphoid tissues, intact virions recycle back to DCs' cell surface allowing virus transmission to CD4+ T-cells. Virion capture also seems to lead to MHC-II-restricted viral antigen presentation, and probably to the activation of HIV-specific CD4+ cells. Functionally, the transmembrane protein gp41 (TM) acts as a class I viral fusion protein. Under the current model, the protein has at least 3 conformational states: pre-fusion native state, pre-hairpin intermediate state, and post-fusion hairpin state. During fusion of viral and target intracellular membranes, the coiled coil regions (heptad repeats) assume a trimer-of-hairpins structure, positioning the fusion peptide in close proximity to the C-terminal region of the ectodomain. The formation of this structure appears to drive apposition and subsequent fusion of viral and target cell membranes. Complete fusion occurs in host cell endosomes and is dynamin-dependent, however some lipid transfer might occur at the plasma membrane. The virus undergoes clathrin-dependent internalization long before endosomal fusion, thus minimizing the surface exposure of conserved viral epitopes during fusion and reducing the efficacy of inhibitors targeting these epitopes. Membranes fusion leads to delivery of the nucleocapsid into the cytoplasm. Its function is as follows. The envelope glycoprotein gp160 precursor down-modulates cell surface CD4 antigen by interacting with it in the endoplasmic reticulum and blocking its transport to the cell surface. In terms of biological role, the gp120-gp41 heterodimer seems to contribute to T-cell depletion during HIV-1 infection. The envelope glycoproteins expressed on the surface of infected cells induce apoptosis through an interaction with uninfected cells expressing the receptor (CD4) and the coreceptors CXCR4 or CCR5. This type of bystander killing may be obtained by at least three distinct mechanisms. First, the interaction between the 2 cells can induce cellular fusion followed by nuclear fusion within the syncytium. Syncytia are condemned to die from apoptosis. Second, the 2 interacting cells may not fuse entirely and simply exchange plasma membrane lipids, after a sort of hemifusion process, followed by rapid death. Third, it is possible that virus-infected cells, on the point of undergoing apoptosis, fuse with CD4-expressing cells, in which case apoptosis is rapidly transmitted from one cell to the other and thus occurs in a sort of contagious fashion. The gp120-gp41 heterodimer allows rapid transcytosis of the virus through CD4 negative cells such as simple epithelial monolayers of the intestinal, rectal and endocervical epithelial barriers. Both gp120 and gp41 specifically recognize glycosphingolipids galactosyl-ceramide (GalCer) or 3' sulfo-galactosyl-ceramide (GalS) present in the lipid rafts structures of epithelial cells. Binding to these alternative receptors allows the rapid transcytosis of the virus through the epithelial cells. This transcytotic vesicle-mediated transport of virions from the apical side to the basolateral side of the epithelial cells does not involve infection of the cells themselves. This chain is Envelope glycoprotein gp160 (env), found in Homo sapiens (Human).